Here is a 1142-residue protein sequence, read N- to C-terminus: Enamelin (1142 aa).

The N-terminal stretch at 1-38 (MLLSCRHGASSPKLDNLVPSGKMKILLVFLGLLCYSAA) is a signal peptide. Ser-53 carries the post-translational modification Phosphoserine. 4 disordered regions span residues 90–347 (YQMP…FYRN), 374–513 (YRRV…IIPK), 543–587 (TEGI…LSHG), and 603–662 (RENS…FPGQ). Pro residues predominate over residues 128–148 (QPQPKTPTPKQPLNEPSPTPT). 2 positions are modified to phosphoserine: Ser-191 and Ser-216. The segment covering 223 to 234 (DFEKPKEKDPPK) has biased composition (basic and acidic residues). Composition is skewed to polar residues over residues 243 to 303 (SVNT…SQSP) and 381 to 395 (TARS…NSAN). N-linked (GlcNAc...) asparagine glycosylation is found at Asn-245, Asn-252, Asn-264, and Asn-291. Positions 277-514 (NPRSNPTGQN…QTQTQIIPKG (238 aa)) are excised as a propeptide. The span at 431 to 442 (PREKQVSQKERT) shows a compositional bias: basic and acidic residues. A compositionally biased stretch (polar residues) spans 453–467 (WRNSQDYGINKSNYK). N-linked (GlcNAc...) asparagine glycosylation is present at Asn-462. Position 547 is a hydroxyproline (Pro-547). Over residues 570-582 (FKEDPGRQEEHLP) the composition is skewed to basic and acidic residues. A propeptide spanning residues 666 to 669 (DMEE) is cleaved from the precursor. Residues 787–816 (NLYKTPTSSPHQKENQPYSNNSPAGLQKNP) show a composition bias toward polar residues. Disordered regions lie at residues 787-820 (NLYK…TWHE), 921-965 (TSIV…SQLS), and 1020-1049 (VFGT…QQRQ). Asn-929 carries N-linked (GlcNAc...) asparagine glycosylation. Positions 952-965 (LRRSTPCSVKSQLS) are enriched in polar residues. The N-linked (GlcNAc...) asparagine glycan is linked to Asn-1040.

In terms of processing, proteolytically cleaved into several smaller polypeptides. Cleavage of N-terminal region of enamelin occurs soon after secretion. Post-translationally, phosphorylated by FAM20C in vitro. In terms of tissue distribution, expressed by secretory-phase ameloblasts. Intact enamelin and large-molecular-weight enamelins are limited to the most superficial layer of the developing enamel matrix, while low-molecular-weight enamelins are observed in deeper enamelin. Preferential localization among the crystallites in rod and interrod enamel.

The protein localises to the secreted. Its subcellular location is the extracellular space. It is found in the extracellular matrix. Functionally, involved in the mineralization and structural organization of enamel. Involved in the extension of enamel during the secretory stage of dental enamel formation. This chain is Enamelin (ENAM), found in Sus scrofa (Pig).